The following is a 313-amino-acid chain: Methionyl-tRNA formyltransferase (313 aa).

109–112 contributes to the (6S)-5,6,7,8-tetrahydrofolate binding site; it reads SLLP.

The protein belongs to the Fmt family.

The enzyme catalyses L-methionyl-tRNA(fMet) + (6R)-10-formyltetrahydrofolate = N-formyl-L-methionyl-tRNA(fMet) + (6S)-5,6,7,8-tetrahydrofolate + H(+). Functionally, attaches a formyl group to the free amino group of methionyl-tRNA(fMet). The formyl group appears to play a dual role in the initiator identity of N-formylmethionyl-tRNA by promoting its recognition by IF2 and preventing the misappropriation of this tRNA by the elongation apparatus. In Pelotomaculum thermopropionicum (strain DSM 13744 / JCM 10971 / SI), this protein is Methionyl-tRNA formyltransferase.